Consider the following 101-residue polypeptide: Small ribosomal subunit protein uS14 (101 aa).

The protein belongs to the universal ribosomal protein uS14 family. Part of the 30S ribosomal subunit. Contacts proteins S3 and S10.

Functionally, binds 16S rRNA, required for the assembly of 30S particles and may also be responsible for determining the conformation of the 16S rRNA at the A site. The protein is Small ribosomal subunit protein uS14 of Sodalis glossinidius (strain morsitans).